The chain runs to 156 residues: MSRKNQAPKREVLPDPLYNSKIVTRLINRVMLDGKRGTAATIVYDAFSTIKEATGNDALEVFETAMENIMPVLEVRARRVGGSNYQVPVEVRPERRTTLGLRWLVNASRARGEHTMKERLAKEIMDAANNTGASVKKREDTHKMAEANRAFAHFRW.

Belongs to the universal ribosomal protein uS7 family. As to quaternary structure, part of the 30S ribosomal subunit. Contacts proteins S9 and S11.

One of the primary rRNA binding proteins, it binds directly to 16S rRNA where it nucleates assembly of the head domain of the 30S subunit. Is located at the subunit interface close to the decoding center, probably blocks exit of the E-site tRNA. The sequence is that of Small ribosomal subunit protein uS7 from Streptococcus uberis (strain ATCC BAA-854 / 0140J).